The chain runs to 562 residues: NAD-dependent malic enzyme (562 aa).

The Proton donor role is filled by Tyr101. Arg154 serves as a coordination point for NAD(+). The Proton acceptor role is filled by Lys172. Glu243, Asp244, and Asp267 together coordinate a divalent metal cation. NAD(+)-binding residues include Asp267 and Asn415.

Belongs to the malic enzymes family. In terms of assembly, homotetramer. Requires Mg(2+) as cofactor. Mn(2+) is required as a cofactor.

The catalysed reaction is (S)-malate + NAD(+) = pyruvate + CO2 + NADH. The enzyme catalyses oxaloacetate + H(+) = pyruvate + CO2. This Shewanella oneidensis (strain ATCC 700550 / JCM 31522 / CIP 106686 / LMG 19005 / NCIMB 14063 / MR-1) protein is NAD-dependent malic enzyme.